A 227-amino-acid polypeptide reads, in one-letter code: Prolactin-4A1 (227 aa).

An N-terminal signal peptide occupies residues Met1–Ala31. Disulfide bonds link Cys87–Cys203 and Cys220–Cys227. Asn175 carries N-linked (GlcNAc...) asparagine glycosylation.

The protein belongs to the somatotropin/prolactin family. Expressed specifically in placenta. Expressed in both trophoblast giant cells and spongiotrophoblast cells.

Its subcellular location is the secreted. The chain is Prolactin-4A1 (Prl4a1) from Mus musculus (Mouse).